Reading from the N-terminus, the 238-residue chain is Small heat shock protein, chloroplastic (238 aa).

The disordered stretch occupies residues 31–87 (APLSTGGRTRPLSVASAAQENRDNSVDVQVSQAQNAGNQQGNAVQRRPRRAGFDISP). A compositionally biased stretch (low complexity) spans 58-75 (VQVSQAQNAGNQQGNAVQ). The 115-residue stretch at 124–238 (AARARRRMPW…ERKVIDVQVQ (115 aa)) folds into the sHSP domain.

It belongs to the small heat shock protein (HSP20) family.

The protein localises to the plastid. It localises to the chloroplast. The polypeptide is Small heat shock protein, chloroplastic (HSP21) (Triticum aestivum (Wheat)).